The sequence spans 552 residues: Chaperonin GroEL 3 (552 aa).

Residues 30 to 33 (TLGP), lysine 51, 87 to 91 (DGTTT), glycine 415, and aspartate 495 each bind ATP.

Belongs to the chaperonin (HSP60) family. In terms of assembly, forms a cylinder of 14 subunits composed of two heptameric rings stacked back-to-back. Interacts with the co-chaperonin GroES.

Its subcellular location is the cytoplasm. The catalysed reaction is ATP + H2O + a folded polypeptide = ADP + phosphate + an unfolded polypeptide.. Functionally, together with its co-chaperonin GroES, plays an essential role in assisting protein folding. The GroEL-GroES system forms a nano-cage that allows encapsulation of the non-native substrate proteins and provides a physical environment optimized to promote and accelerate protein folding. This is Chaperonin GroEL 3 from Mesorhizobium japonicum (strain LMG 29417 / CECT 9101 / MAFF 303099) (Mesorhizobium loti (strain MAFF 303099)).